A 435-amino-acid polypeptide reads, in one-letter code: Cysteine--tRNA ligase (435 aa).

Cysteine 24 serves as a coordination point for Zn(2+). Positions 26–36 (PTVYDHIHIGN) match the 'HIGH' region motif. Residues cysteine 202, histidine 228, and glutamate 232 each contribute to the Zn(2+) site. The short motif at 260-264 (KMSKS) is the 'KMSKS' region element. Lysine 263 provides a ligand contact to ATP.

It belongs to the class-I aminoacyl-tRNA synthetase family. As to quaternary structure, monomer. Zn(2+) is required as a cofactor.

It localises to the cytoplasm. It carries out the reaction tRNA(Cys) + L-cysteine + ATP = L-cysteinyl-tRNA(Cys) + AMP + diphosphate. The sequence is that of Cysteine--tRNA ligase from Mycoplasmoides gallisepticum (strain R(low / passage 15 / clone 2)) (Mycoplasma gallisepticum).